The primary structure comprises 305 residues: Nucleotide-binding protein Saro_2904 (305 aa).

15-22 (GLLGAGKT) is a binding site for ATP. 68–71 (DTRT) contacts GTP.

Belongs to the RapZ-like family.

In terms of biological role, displays ATPase and GTPase activities. In Novosphingobium aromaticivorans (strain ATCC 700278 / DSM 12444 / CCUG 56034 / CIP 105152 / NBRC 16084 / F199), this protein is Nucleotide-binding protein Saro_2904.